The sequence spans 103 residues: V-type ATP synthase subunit F (103 aa).

This sequence belongs to the V-ATPase F subunit family.

Functionally, produces ATP from ADP in the presence of a proton gradient across the membrane. This chain is V-type ATP synthase subunit F, found in Clostridium botulinum (strain Alaska E43 / Type E3).